The following is a 283-amino-acid chain: ATP phosphoribosyltransferase (283 aa).

This sequence belongs to the ATP phosphoribosyltransferase family. Long subfamily. Mg(2+) is required as a cofactor.

It is found in the cytoplasm. The catalysed reaction is 1-(5-phospho-beta-D-ribosyl)-ATP + diphosphate = 5-phospho-alpha-D-ribose 1-diphosphate + ATP. Its pathway is amino-acid biosynthesis; L-histidine biosynthesis; L-histidine from 5-phospho-alpha-D-ribose 1-diphosphate: step 1/9. Feedback inhibited by histidine. Catalyzes the condensation of ATP and 5-phosphoribose 1-diphosphate to form N'-(5'-phosphoribosyl)-ATP (PR-ATP). Has a crucial role in the pathway because the rate of histidine biosynthesis seems to be controlled primarily by regulation of HisG enzymatic activity. The polypeptide is ATP phosphoribosyltransferase (Bacteroides fragilis (strain ATCC 25285 / DSM 2151 / CCUG 4856 / JCM 11019 / LMG 10263 / NCTC 9343 / Onslow / VPI 2553 / EN-2)).